The following is a 235-amino-acid chain: Glutathione S-transferase L3 (235 aa).

The region spanning 27-108 (GTTRLYTSYV…YLDNTFEGPS (82 aa)) is the GST N-terminal domain. Glutathione-binding positions include 37-38 (CP), 65-66 (NR), 79-80 (KV), and 92-93 (ES). The GST C-terminal domain occupies 86-230 (NGKIIGESLD…MDPKEIVEVF (145 aa)).

It belongs to the GST superfamily. Lambda family.

It is found in the cytoplasm. It localises to the cytosol. It catalyses the reaction RX + glutathione = an S-substituted glutathione + a halide anion + H(+). Functionally, catalyzes the glutathione-dependent reduction of S-glutathionylquercetin to quercetin. This chain is Glutathione S-transferase L3 (GSTL3), found in Arabidopsis thaliana (Mouse-ear cress).